A 500-amino-acid polypeptide reads, in one-letter code: Recombining binding protein suppressor of hairless (500 aa).

The disordered stretch occupies residues 1–30 (MDHTEGSPAEEPPAHAPSPGKFGERPPPKR). 2 DNA-binding regions span residues 57-67 (QKSYGNEKRFF) and 165-170 (SKPSKK). The residue at position 175 (K175) is an N6-acetyllysine. The DNA-binding stretch occupies residues 192-197 (RLRSQT). Residues 355–445 (PVVESLQLNG…YSTSLTFTYT (91 aa)) enclose the IPT/TIG domain. A compositionally biased stretch (polar residues) spans 465 to 481 (SSQVPPNESNTNSEGSY). A disordered region spans residues 465-500 (SSQVPPNESNTNSEGSYTNASTNSTSVTSSTATVVS). A compositionally biased stretch (low complexity) spans 482-500 (TNASTNSTSVTSSTATVVS).

Belongs to the Su(H) family. In terms of assembly, interacts with activated NOTCH1, NOTCH2 or NOTCH3. Interacts with MINT/SHARP. This interaction may mediate the recruitment of large corepressor complexes containing proteins such as HDAC1, HDAC2, NCOR2, SAP30, FHL1/KYOT2 and CIR1. Interacts with EP300, MAML1 and PTF1A. Interacts with RITA1/C12orf52, leading to nuclear export, prevent the interaction between RBPJ and NICD product and subsequent down-regulation of the Notch signaling pathway. Interacts with SNW1. Interacts with CHCHD2 and CXXC5. Interacts with BEND6 (via BEN domain). Interacts with NKAPL. Interacts with ZMIZ1. Interacts with RBM15. Interacts with L3MBTL3 and KDM1A; the interaction with KDM1A is weaker in the absence of L3MBTL3 and the interaction with L3MBTL3 is impaired by Notch-derived peptide containing the intracellular domain (NICD). As to quaternary structure, (Microbial infection) Interacts with EBV EBNA2. Interacts with EBV EBNA3. Interacts with EBV EBNA4. Interacts with EBV EBNA6 (via N-terminus).

The protein localises to the nucleus. It is found in the cytoplasm. Its function is as follows. Transcriptional regulator that plays a central role in Notch signaling, a signaling pathway involved in cell-cell communication that regulates a broad spectrum of cell-fate determinations. Acts as a transcriptional repressor when it is not associated with Notch proteins. When associated with some NICD product of Notch proteins (Notch intracellular domain), it acts as a transcriptional activator that activates transcription of Notch target genes. Probably represses or activates transcription via the recruitment of chromatin remodeling complexes containing histone deacetylase or histone acetylase proteins, respectively. Specifically binds to the immunoglobulin kappa-type J segment recombination signal sequence. Binds specifically to methylated DNA. Binds to the oxygen responsive element of COX4I2 and activates its transcription under hypoxia conditions (4% oxygen). Negatively regulates the phagocyte oxidative burst in response to bacterial infection by repressing transcription of NADPH oxidase subunits. This Homo sapiens (Human) protein is Recombining binding protein suppressor of hairless.